Reading from the N-terminus, the 281-residue chain is Large ribosomal subunit protein uL2 (281 aa).

Disordered stretches follow at residues 1–23 and 224–281; these read MAVKHYKPVTNGRRNMSSLDYSK and RGSV…KDSK. The span at 12–23 shows a compositional bias: polar residues; that stretch reads GRRNMSSLDYSK. Residues 261-281 show a composition bias toward basic residues; it reads KTRKTKKSSTKLILRRRKDSK.

Belongs to the universal ribosomal protein uL2 family. Part of the 50S ribosomal subunit. Forms a bridge to the 30S subunit in the 70S ribosome.

One of the primary rRNA binding proteins. Required for association of the 30S and 50S subunits to form the 70S ribosome, for tRNA binding and peptide bond formation. It has been suggested to have peptidyltransferase activity; this is somewhat controversial. Makes several contacts with the 16S rRNA in the 70S ribosome. The chain is Large ribosomal subunit protein uL2 from Mycoplasmopsis agalactiae (strain NCTC 10123 / CIP 59.7 / PG2) (Mycoplasma agalactiae).